Consider the following 317-residue polypeptide: Mitochondrial thiamine pyrophosphate carrier 1 (317 aa).

Solcar repeat units follow at residues 12-110 (GTRR…TTQV), 120-206 (PPAL…LRPV), and 214-309 (PFGS…SLKL). 6 consecutive transmembrane segments (helical) span residues 17–35 (VVLS…VAPL), 91–107 (LMYV…YRTT), 126–146 (FVSG…LDLL), 181–198 (GCSA…LFFA), 220–240 (AAAG…LDLV), and 284–301 (GLTV…ITMW).

It belongs to the mitochondrial carrier (TC 2.A.29) family.

It localises to the mitochondrion inner membrane. In terms of biological role, mitochondrial transporter that mediates uptake of thiamine pyrophosphate (ThPP) into mitochondria. The polypeptide is Mitochondrial thiamine pyrophosphate carrier 1 (tpc1) (Neosartorya fischeri (strain ATCC 1020 / DSM 3700 / CBS 544.65 / FGSC A1164 / JCM 1740 / NRRL 181 / WB 181) (Aspergillus fischerianus)).